We begin with the raw amino-acid sequence, 504 residues long: Myocilin (504 aa).

The signal sequence occupies residues 1–32; the sequence is MRFFCARCCSFGPEMPAVQLLLLACLVWDVGA. Asn-57 is a glycosylation site (N-linked (GlcNAc...) asparagine). Residues 74–184 adopt a coiled-coil conformation; sequence LQRDSSTQRL…QEVARLRRGQ (111 aa). 2 disordered regions span residues 106–131 and 170–200; these read QAARPQETQEGLQRELGTLRRERDQL and LESSSQEVARLRRGQCPQTRDTARAVPPGSR. Residues 122–131 show a composition bias toward basic and acidic residues; the sequence is GTLRRERDQL. An Olfactomedin-like domain is found at 244 to 503; that stretch reads GCGELVWVGE…MVTYDIKLSK (260 aa). Cys-245 and Cys-433 form a disulfide bridge. Ca(2+)-binding residues include Asp-380, Asn-428, Ala-429, Ile-477, and Asp-478. The short motif at 502–504 is the Microbody targeting signal element; the sequence is SKM.

As to quaternary structure, homodimer (via N-terminus). Can also form higher oligomers. Interacts with OLFM3, FN1, NRCAM, GLDN and NFASC. Interacts (via N-terminus) with MYL2. Interacts with SFRP1, FRZB, FZD7, FZD10, FZD1 and WIF1; regulates Wnt signaling. Interacts with SNTA1; regulates muscle hypertrophy. Interacts with ERBB2 and ERBB3; activates ERBB2-ERBB3 signaling pathway. Interacts with SNCG; affects its secretion and its aggregation. Post-translationally, different isoforms may arise by post-translational modifications. In terms of processing, glycosylated. Palmitoylated. Post-translationally, undergoes a calcium-dependent proteolytic cleavage at Arg-226 by CAPN2 in the endoplasmic reticulum. The result is the production of two fragments, one of 35 kDa containing the C-terminal olfactomedin-like domain, and another of 20 kDa containing the N-terminal leucine zipper-like domain. Detected in aqueous humor. Detected in the eye (at protein level). Widely expressed. Highly expressed in various types of muscle, ciliary body, papillary sphincter, skeletal muscle, heart, and bone marrow-derived mesenchymal stem cells. Expressed predominantly in the retina. In normal eyes, found in the inner uveal meshwork region and the anterior portion of the meshwork. In contrast, in many glaucomatous eyes, it is found in more regions of the meshwork and seems to be expressed at higher levels than in normal eyes, regardless of the type or clinical severity of glaucoma. The myocilin 35 kDa fragment is detected in aqueous humor and to a lesser extent in iris and ciliary body.

Its subcellular location is the secreted. It localises to the golgi apparatus. The protein resides in the cytoplasmic vesicle. It is found in the extracellular space. The protein localises to the extracellular matrix. Its subcellular location is the extracellular exosome. It localises to the mitochondrion. The protein resides in the mitochondrion intermembrane space. It is found in the mitochondrion inner membrane. The protein localises to the mitochondrion outer membrane. Its subcellular location is the rough endoplasmic reticulum. It localises to the cell projection. The protein resides in the cilium. It is found in the endoplasmic reticulum. Secreted glycoprotein regulating the activation of different signaling pathways in adjacent cells to control different processes including cell adhesion, cell-matrix adhesion, cytoskeleton organization and cell migration. Promotes substrate adhesion, spreading and formation of focal contacts. Negatively regulates cell-matrix adhesion and stress fiber assembly through Rho protein signal transduction. Modulates the organization of actin cytoskeleton by stimulating the formation of stress fibers through interactions with components of Wnt signaling pathways. Promotes cell migration through activation of PTK2 and the downstream phosphatidylinositol 3-kinase signaling. Plays a role in bone formation and promotes osteoblast differentiation in a dose-dependent manner through mitogen-activated protein kinase signaling. Mediates myelination in the peripheral nervous system through ERBB2/ERBB3 signaling. Plays a role as a regulator of muscle hypertrophy through the components of dystrophin-associated protein complex. Involved in positive regulation of mitochondrial depolarization. Plays a role in neurite outgrowth. May participate in the obstruction of fluid outflow in the trabecular meshwork. The sequence is that of Myocilin (MYOC) from Homo sapiens (Human).